A 289-amino-acid polypeptide reads, in one-letter code: SNF1-related protein kinase regulatory subunit beta-2 (289 aa).

A compositionally biased stretch (basic and acidic residues) spans 1–10 (MGNVNAREEA). Residues 1-59 (MGNVNAREEANSNNASAVEDEDAEICSREAMSAASDGNHVAPPELMGQSPPHSPRATQS) are disordered. Residue G2 is the site of N-myristoyl glycine attachment. Positions 103-180 (PTMITWCHGG…AGNTFNILDL (78 aa)) are kinase-interacting sequence (KIS). Residues 217–289 (EPPVVPPHLQ…TVVLYKSLQR (73 aa)) form an association with SNF1 complex (ASC) region.

It belongs to the 5'-AMP-activated protein kinase beta subunit family. As to quaternary structure, subunit of a probable heterotrimeric complex consisting of an alpha catalytic (KIN10 or KIN11) subunit, and a beta (KINB) and a gamma (KING or SNF4) non-catalytic regulatory subunits. Interacts with SNF4. Interacts with FLZ1, FLZ2, FLZ8, FLZ9, FLZ10, FLZ12, FLZ13 and FLZ14. Sumoylated. In terms of tissue distribution, expressed in leaves, stems, roots, flower buds and flowers. Not detectable in siliques.

The protein resides in the cell membrane. Regulatory subunit of the probable trimeric SNF1-related protein kinase (SnRK) complex, which may play a role in a signal transduction cascade regulating gene expression and carbohydrate metabolism in higher plants. The SnRK complex may also be involved in the regulation of fatty acid synthesis by phosphorylation of acetyl-CoA carboxylase and in assimilation of nitrogen by phosphorylating nitrate reductase. In Arabidopsis thaliana (Mouse-ear cress), this protein is SNF1-related protein kinase regulatory subunit beta-2 (KINB2).